Consider the following 41-residue polypeptide: Augerpeptide-s11a (41 aa).

Post-translationally, contains 4 disulfide bonds. As to expression, expressed by the venom duct.

It is found in the secreted. Its function is as follows. Does not elicit any observable symptomatology in C.elegans. The polypeptide is Augerpeptide-s11a (Terebra subulata (Chocolate spotted auger)).